Consider the following 776-residue polypeptide: A-type ATP synthase subunit A (776 aa).

This sequence belongs to the ATPase alpha/beta chains family. Has multiple subunits with at least A(3), B(3), C, D, E, F, H, I and proteolipid K(x). In terms of processing, this protein undergoes a protein self splicing that involves a post-translational excision of the VDE intervening region (intein) followed by peptide ligation.

It is found in the cell membrane. It carries out the reaction ATP + H2O + 4 H(+)(in) = ADP + phosphate + 5 H(+)(out). In terms of biological role, component of the A-type ATP synthase that produces ATP from ADP in the presence of a proton gradient across the membrane. The A chain is the catalytic subunit. This is A-type ATP synthase subunit A from Thermoplasma volcanium (strain ATCC 51530 / DSM 4299 / JCM 9571 / NBRC 15438 / GSS1).